Consider the following 716-residue polypeptide: Iron-sulfur clusters transporter atm1, mitochondrial (716 aa).

Residues 1–18 constitute a mitochondrion transit peptide; sequence MAPSIKLSTMATSLHRAH. Residues 19–123 are Mitochondrial matrix-facing; it reads GTSALLRRPR…PKGSWGDKAR (105 aa). Residues 57-87 are disordered; the sequence is LFAPNGSAKDESKPAVSTVPKTTGRGPSDPL. A helical membrane pass occupies residues 124–145; sequence VLLAIGLLVGGKVLNVQVPFYF. Residues 124-414 enclose the ABC transmembrane type-1 domain; that stretch reads VLLAIGLLVG…LGSVYRELRQ (291 aa). Over 146-168 the chain is Mitochondrial intermembrane; that stretch reads REIVDSLNIDFSTTGGSVTAVAG. A helical transmembrane segment spans residues 169–192; it reads AMILGYGAARVGAVVSQELRNAVF. Residues 193–241 are Mitochondrial matrix-facing; it reads ASVAQKAIRKVARNTFEHLLNLDLSFHLSKQTGGLTRAIDRGTKGISFL. Residues 242-265 traverse the membrane as a helical segment; it reads LTSMVFHIVPTALEISMVCGILTY. Asparagine 266 is a topological domain (mitochondrial intermembrane). Residues 267–287 form a helical membrane-spanning segment; that stretch reads FGWQYAALTALTMVSYTAFTI. Topologically, residues 288 to 353 are mitochondrial matrix; sequence LTTAWRTKFR…NSIKVATSLA (66 aa). Glutathione is bound by residues 293–297 and 356–359; these read RTKFR and NSGQ. A helical membrane pass occupies residues 354–372; the sequence is FLNSGQNIIFSSALTVMMY. At 373–387 the chain is on the mitochondrial intermembrane side; the sequence is MGAHGVATGQLTVGD. The chain crosses the membrane as a helical span at residues 388 to 409; it reads LVLINQLVFQLSVPLNFLGSVY. Glycine 406 is a glutathione binding site. Residues 410–716 are Mitochondrial matrix-facing; sequence RELRQSLLDM…KEEVGEKKEA (307 aa). In terms of domain architecture, ABC transporter spans 449-690; it reads IEFKDVTFGY…NGVYAQLWRA (242 aa). Residues tyrosine 458 and 482–493 each bind ATP; that span reads GPSGCGKSTLLR. Positions 697–716 are disordered; it reads EEGEVSKKGEKEEVGEKKEA. Residues 700–716 are compositionally biased toward basic and acidic residues; sequence EVSKKGEKEEVGEKKEA.

Belongs to the ABC transporter superfamily. ABCB family. Heavy Metal importer (TC 3.A.1.210) subfamily. Homodimer.

Its subcellular location is the mitochondrion inner membrane. Performs an essential function in the generation of cytoplasmic iron-sulfur proteins by mediating the ATP-dependent export of Fe/S cluster precursors synthesized by egt-3 and other mitochondrial proteins. Hydrolyzes ATP. Binds glutathione and may function by transporting a glutathione-conjugated iron-sulfur compound. This Neurospora crassa (strain ATCC 24698 / 74-OR23-1A / CBS 708.71 / DSM 1257 / FGSC 987) protein is Iron-sulfur clusters transporter atm1, mitochondrial.